The primary structure comprises 152 residues: Large ribosomal subunit protein uL15 (152 aa).

The disordered stretch occupies residues 1-66 (MRSNPMTLRL…GFEGGQTPMQ (66 aa)). The span at 28 to 38 (RGIGSGLGKTA) shows a compositional bias: gly residues. Positions 39–52 (GRGHKGSFARKGGG) are enriched in basic residues.

This sequence belongs to the universal ribosomal protein uL15 family. Part of the 50S ribosomal subunit.

Functionally, binds to the 23S rRNA. The protein is Large ribosomal subunit protein uL15 of Xanthomonas oryzae pv. oryzae (strain KACC10331 / KXO85).